Consider the following 478-residue polypeptide: MKNIYNTYDVINKSGINFGTSGARGLVTDFTPEVCARFTISFLTVMQQRFSFTTVALAIDNRPSSYAMAQACAAALQEKGIKTVYYGVIPTPALAHQSISDKVPAIMVTGSHIPFDRNGLKFYRPDGEITKDDENAIIHVDASFMQPKLEQLTISTIAARNYILRYTSLFPMPFLKNKRIGIYEHSSAGRDLYKTLFKMLGATVVSLARSDEFVPIDTEAVSEDDRNKAITWAKKYQLDAIFSTDGDGDRPLIADEYGNWLRGDILGLLCSLELAADAVAIPVSCNSTISSGNFFKHVERTKIGSPYVIAAFAKLSANYNCIAGFEANGGFLLGSDVYINQRLLKALPTRDALLPAIMLLFGSKDKSISELVKKLPARYTYSNRLQDISVKTSMSLINLGLTDQEDFLQYIGFNKHHILHSDVTDGFRITIDNNNIIHLRPSGNAPELRCYAEADSQEDACNIVETVLSNIKSKLGRA.

A helical membrane pass occupies residues 30 to 46 (FTPEVCARFTISFLTVM). S111 (phosphoserine intermediate) is an active-site residue. S111, D245, D247, and D249 together coordinate Mg(2+). Residues 265-284 (ILGLLCSLELAADAVAIPVS) traverse the membrane as a helical segment.

Belongs to the phosphohexose mutase family. Mg(2+) serves as cofactor.

Its subcellular location is the cell membrane. The enzyme catalyses alpha-D-mannose 1-phosphate = D-mannose 6-phosphate. It functions in the pathway nucleotide-sugar biosynthesis; GDP-alpha-D-mannose biosynthesis; alpha-D-mannose 1-phosphate from D-fructose 6-phosphate: step 2/2. Its pathway is bacterial outer membrane biogenesis; LPS O-antigen biosynthesis. In terms of biological role, involved in GDP-mannose biosynthesis which serves as the activated sugar nucleotide precursor for mannose residues in cell surface polysaccharides. This enzyme participates in synthesis of the LPS group C2 O antigen. This chain is Phosphomannomutase (manB), found in Salmonella muenchen.